Reading from the N-terminus, the 398-residue chain is Succinate--CoA ligase [ADP-forming] subunit beta (398 aa).

In terms of domain architecture, ATP-grasp spans 9-254 (KALLKSFGAP…KTEEDAKEIE (246 aa)). ATP is bound by residues Lys46, 53-55 (GRG), Glu109, Ala112, and Glu117. Residues Asn209 and Asp223 each coordinate Mg(2+). Residues Asn274 and 331 to 333 (GIM) each bind substrate.

The protein belongs to the succinate/malate CoA ligase beta subunit family. As to quaternary structure, heterotetramer of two alpha and two beta subunits. Requires Mg(2+) as cofactor.

The catalysed reaction is succinate + ATP + CoA = succinyl-CoA + ADP + phosphate. It catalyses the reaction GTP + succinate + CoA = succinyl-CoA + GDP + phosphate. The protein operates within carbohydrate metabolism; tricarboxylic acid cycle; succinate from succinyl-CoA (ligase route): step 1/1. Succinyl-CoA synthetase functions in the citric acid cycle (TCA), coupling the hydrolysis of succinyl-CoA to the synthesis of either ATP or GTP and thus represents the only step of substrate-level phosphorylation in the TCA. The beta subunit provides nucleotide specificity of the enzyme and binds the substrate succinate, while the binding sites for coenzyme A and phosphate are found in the alpha subunit. This Allorhizobium ampelinum (strain ATCC BAA-846 / DSM 112012 / S4) (Agrobacterium vitis (strain S4)) protein is Succinate--CoA ligase [ADP-forming] subunit beta.